A 78-amino-acid chain; its full sequence is Esculentin-2PLa (78 aa).

The first 22 residues, Met1–Cys22, serve as a signal peptide directing secretion. A propeptide spanning residues Glu23 to Met39 is cleaved from the precursor. A disulfide bridge connects residues Cys72 and Cys78.

In terms of tissue distribution, expressed by the skin glands.

It localises to the secreted. In terms of biological role, antimicrobial activity against the Gram-negative bacterium E.coli, the Gram-positive bacterium S.aureus and the yeast C.albicans. The protein is Esculentin-2PLa of Lithobates palustris (Pickerel frog).